Reading from the N-terminus, the 93-residue chain is Large ribosomal subunit protein bL27 (93 aa).

The disordered stretch occupies residues 1-22 (MAHKKAGGSSRNGRDSEGRRLG).

It belongs to the bacterial ribosomal protein bL27 family.

The sequence is that of Large ribosomal subunit protein bL27 from Methylobacterium sp. (strain 4-46).